The primary structure comprises 431 residues: Large envelope protein (431 aa).

A lipid anchor (N-myristoyl glycine; by host) is attached at Gly2. The segment at 2-148 (GNNIKVTFNP…PPLRDTHPHL (147 aa)) is pre-S1. The tract at residues 2-207 (GNNIKVTFNP…PSTTGDPALS (206 aa)) is pre-S. Topologically, residues 2–214 (GNNIKVTFNP…ALSPEMSPSS (213 aa)) are virion surface; in external conformation. Topologically, residues 2-286 (GNNIKVTFNP…NGFRWMYLRR (285 aa)) are intravirion; in internal conformation. A glycan (N-linked (GlcNAc...) asparagine) is linked at Asn3. Residues 115–147 (IPRGLVPPQTPTNRDQGRKPTPPTPPLRDTHPH) form a disordered region. Residues 149–207 (TMKNQTFHLQGFVDGLRDLTTTERQHNAYGDPFTTLSPAVPTVSTILSPPSTTGDPALS) form a pre-S2 region. A helical membrane pass occupies residues 215–235 (LLGLLAGLQVVYFLWTKILTI). Topologically, residues 236 to 286 (AQNLDWWWTSLSFPGGIPECTGQNSQFQTCKHLPTSCPPTCNGFRWMYLRR) are intravirion; in external conformation. Residues 287–307 (FIIYLLVLLLCLIFLLVLLDW) traverse the membrane as a helical segment. Topologically, residues 308-379 (KGFIPVCPLQ…WALARFSWLN (72 aa)) are virion surface. Asn351 is a glycosylation site (N-linked (GlcNAc...) asparagine; by host). A helical membrane pass occupies residues 380 to 400 (LLVPLLQWLGGISLIAWFLLI). Topologically, residues 401–406 (WMIWFW) are intravirion. Residues 407–429 (GPALLSILPPFIPIFVLFFLIWV) traverse the membrane as a helical segment. Topologically, residues 430–431 (YI) are virion surface.

This sequence belongs to the orthohepadnavirus major surface antigen family. In its internal form (Li-HBsAg), interacts with the capsid protein and with the isoform S. Interacts with host chaperone CANX. As to quaternary structure, associates with host chaperone CANX through its pre-S2 N glycan; this association may be essential for isoform M proper secretion. In terms of assembly, interacts with isoform L. Interacts with the antigens of satellite virus HDV (HDVAgs); this interaction is required for encapsidation of HDV genomic RNA. Isoform M is N-terminally acetylated by host at a ratio of 90%, and N-glycosylated by host at the pre-S2 region. Post-translationally, myristoylated.

The protein localises to the virion membrane. The large envelope protein exists in two topological conformations, one which is termed 'external' or Le-HBsAg and the other 'internal' or Li-HBsAg. In its external conformation the protein attaches the virus to cell receptors and thereby initiating infection. This interaction determines the species specificity and liver tropism. This attachment induces virion internalization predominantly through caveolin-mediated endocytosis. The large envelope protein also assures fusion between virion membrane and endosomal membrane. In its internal conformation the protein plays a role in virion morphogenesis and mediates the contact with the nucleocapsid like a matrix protein. Its function is as follows. The middle envelope protein plays an important role in the budding of the virion. It is involved in the induction of budding in a nucleocapsid independent way. In this process the majority of envelope proteins bud to form subviral lipoprotein particles of 22 nm of diameter that do not contain a nucleocapsid. This Marmota monax (Woodchuck) protein is Large envelope protein.